Consider the following 84-residue polypeptide: Large ribosomal subunit protein bL27 (84 aa).

The segment at 1 to 24 (MAHKKGAASTKNGRDSNSQRLGVK) is disordered. The segment covering 9–20 (STKNGRDSNSQR) has biased composition (polar residues).

The protein belongs to the bacterial ribosomal protein bL27 family.

The polypeptide is Large ribosomal subunit protein bL27 (Nocardioides sp. (strain ATCC BAA-499 / JS614)).